We begin with the raw amino-acid sequence, 362 residues long: Stress response regulator protein 1 (362 aa).

2 disordered regions span residues 1–39 and 163–188; these read MTRL…SLVQ and TLKS…ETKT. Residues 19–39 show a composition bias toward low complexity; that stretch reads PSQLLHSASLSSSPSSPSLVQ. Residues 209–327 enclose the Response regulatory domain; that stretch reads KFLLVDDNLI…LDFMANVIDE (119 aa). Asp260 carries the 4-aspartylphosphate modification.

Required for stress adaptation, morphogenesis and virulence. The polypeptide is Stress response regulator protein 1 (SRR1) (Lodderomyces elongisporus (strain ATCC 11503 / CBS 2605 / JCM 1781 / NBRC 1676 / NRRL YB-4239) (Yeast)).